Consider the following 246-residue polypeptide: Transcription factor MYB113 (246 aa).

HTH myb-type domains follow at residues 5-61 (PKGL…KPSI) and 62-112 (KRGK…SKKH). DNA-binding regions (H-T-H motif) lie at residues 33–57 (WHRV…LNYL) and 85–108 (WSLI…NTHL).

Interacts with BHLH002/EGL3/MYC146, BHLH012/MYC1 and BHLH042/TT8.

It localises to the nucleus. Transcription activator, when associated with BHLH002/EGL3/MYC146, BHLH012/MYC1, or BHLH042/TT8. This Arabidopsis thaliana (Mouse-ear cress) protein is Transcription factor MYB113 (MYB113).